The sequence spans 172 residues: METLHHPLVKMEDDYALSSDSEPNSSCMASTWDWKNNDERYSLSQTPSPQSLSPAVSYESPYSSSSHTQGLEEMPFSYSLLQYPSLCHGDNGDLTKKDHGHKPSMTVQRRRKASEREKLRMRAIAEALHTLRNNLPPMYSQGRQPLTKIQTLKCTINYISELTNLLQCSKRV.

Residues 1–69 (METLHHPLVK…SPYSSSSHTQ (69 aa)) form a disordered region. Over residues 18-29 (SSDSEPNSSCMA) the composition is skewed to polar residues. The segment covering 42 to 66 (SLSQTPSPQSLSPAVSYESPYSSSS) has biased composition (low complexity). A bHLH domain is found at 108-162 (QRRRKASEREKLRMRAIAEALHTLRNNLPPMYSQGRQPLTKIQTLKCTINYISEL).

It is found in the nucleus. In terms of biological role, involved in specifying the paraxial, but not dorsal, mesoderm. May regulate the expression of T-box transcription factors required for mesoderm formation and differentiation, such as brachyury T, wnt8, vegt and eomes. The protein is Mesogenin-1 (msgn1) of Xenopus tropicalis (Western clawed frog).